The chain runs to 240 residues: Phosphoenolpyruvate guanylyltransferase (240 aa).

Positions 161, 178, and 181 each coordinate phosphoenolpyruvate.

The protein belongs to the CofC family.

The enzyme catalyses phosphoenolpyruvate + GTP + H(+) = enolpyruvoyl-2-diphospho-5'-guanosine + diphosphate. The protein operates within cofactor biosynthesis; coenzyme F420 biosynthesis. Guanylyltransferase that catalyzes the activation of phosphoenolpyruvate (PEP) as enolpyruvoyl-2-diphospho-5'-guanosine, via the condensation of PEP with GTP. It is involved in the biosynthesis of coenzyme F420, a hydride carrier cofactor. This is Phosphoenolpyruvate guanylyltransferase from Rhodococcus opacus (strain B4).